A 105-amino-acid polypeptide reads, in one-letter code: ATP-dependent Clp protease adapter protein ClpS (105 aa).

Positions 1–27 (MVVMSAPTEPKSRPGTTGQRESAPEDV) are disordered.

Belongs to the ClpS family. As to quaternary structure, binds to the N-terminal domain of the chaperone ClpA.

Involved in the modulation of the specificity of the ClpAP-mediated ATP-dependent protein degradation. This chain is ATP-dependent Clp protease adapter protein ClpS, found in Mycolicibacterium paratuberculosis (strain ATCC BAA-968 / K-10) (Mycobacterium paratuberculosis).